The chain runs to 116 residues: Putative gamma-glutamylcyclotransferase PH0828 (116 aa).

13 to 16 lines the substrate pocket; it reads YGTL. Catalysis depends on glutamate 76, which acts as the Proton acceptor.

The protein belongs to the gamma-glutamylcyclotransferase family.

In terms of biological role, putative gamma-glutamylcyclotransferase. The polypeptide is Putative gamma-glutamylcyclotransferase PH0828 (Pyrococcus horikoshii (strain ATCC 700860 / DSM 12428 / JCM 9974 / NBRC 100139 / OT-3)).